A 111-amino-acid polypeptide reads, in one-letter code: Phosphoribosyl-ATP pyrophosphatase (111 aa).

It belongs to the PRA-PH family.

The protein localises to the cytoplasm. The enzyme catalyses 1-(5-phospho-beta-D-ribosyl)-ATP + H2O = 1-(5-phospho-beta-D-ribosyl)-5'-AMP + diphosphate + H(+). It functions in the pathway amino-acid biosynthesis; L-histidine biosynthesis; L-histidine from 5-phospho-alpha-D-ribose 1-diphosphate: step 2/9. This chain is Phosphoribosyl-ATP pyrophosphatase, found in Alcanivorax borkumensis (strain ATCC 700651 / DSM 11573 / NCIMB 13689 / SK2).